The primary structure comprises 124 residues: Ribonuclease pancreatic (124 aa).

The segment at 1-24 is disordered; the sequence is KETAAAKFQRQHMDSSTSSASSSN. Substrate-binding residues include Lys-7 and Arg-10. His-12 acts as the Proton acceptor in catalysis. 4 disulfides stabilise this stretch: Cys-26–Cys-84, Cys-40–Cys-95, Cys-58–Cys-110, and Cys-65–Cys-72. N-linked (GlcNAc...) asparagine; in river-breed only glycosylation is present at Asn-34. Residues 41–45, Lys-66, and Arg-85 contribute to the substrate site; that span reads KPVNT. Residue His-119 is the Proton donor of the active site.

Belongs to the pancreatic ribonuclease family. In terms of assembly, monomer. Interacts with and forms tight 1:1 complexes with RNH1. Dimerization of two such complexes may occur. Interaction with RNH1 inhibits this protein. In terms of processing, swamp breed ribonuclease do not bind carbohydrate, but there is evidence of a polymorphic form that does. Pancreas.

The protein resides in the secreted. It catalyses the reaction an [RNA] containing cytidine + H2O = an [RNA]-3'-cytidine-3'-phosphate + a 5'-hydroxy-ribonucleotide-3'-[RNA].. It carries out the reaction an [RNA] containing uridine + H2O = an [RNA]-3'-uridine-3'-phosphate + a 5'-hydroxy-ribonucleotide-3'-[RNA].. In terms of biological role, endonuclease that catalyzes the cleavage of RNA on the 3' side of pyrimidine nucleotides. Acts on single-stranded and double-stranded RNA. In Bubalus bubalis (Domestic water buffalo), this protein is Ribonuclease pancreatic (RNASE1).